We begin with the raw amino-acid sequence, 122 residues long: Large ribosomal subunit protein uL14 (122 aa).

The protein belongs to the universal ribosomal protein uL14 family. As to quaternary structure, part of the 50S ribosomal subunit. Forms a cluster with proteins L3 and L19. In the 70S ribosome, L14 and L19 interact and together make contacts with the 16S rRNA in bridges B5 and B8.

In terms of biological role, binds to 23S rRNA. Forms part of two intersubunit bridges in the 70S ribosome. The protein is Large ribosomal subunit protein uL14 of Chlamydia pneumoniae (Chlamydophila pneumoniae).